Consider the following 706-residue polypeptide: Septin ring organizing protein mid2 (706 aa).

Disordered regions lie at residues 62–102 (STAP…PFST) and 145–180 (DEAS…KKNP). Polar residues-rich tracts occupy residues 81–90 (YDQTLSNSSS) and 149–169 (NKSS…SNQG). S379 is subject to Phosphoserine. A PH domain is found at 583–688 (TLLCDGYLCQ…WMSTLRQHLG (106 aa)).

It belongs to the BUD4 family.

It localises to the cytoplasm. The protein resides in the cell cortex. It is found in the cytoskeleton. Its function is as follows. Responsible for the proper stability and function of septins during cytokinesis. Required for the correct formation of the medial septin ring structure in mitosis and for the proper localization of endo-glucanases agn1 and eng1, which are needed for efficient cell separation. May act as a landmark for the localization of hydrolytic proteins to the medial region. This Schizosaccharomyces pombe (strain 972 / ATCC 24843) (Fission yeast) protein is Septin ring organizing protein mid2 (mid2).